We begin with the raw amino-acid sequence, 260 residues long: Carbonic anhydrase 2 (260 aa).

The Alpha-carbonic anhydrase domain occupies His-3–Phe-259. His-64 serves as the catalytic Proton donor/acceptor. 3 residues coordinate Zn(2+): His-94, His-96, and His-119. Thr-198–Thr-199 lines the substrate pocket.

Belongs to the alpha-carbonic anhydrase family. Requires Zn(2+) as cofactor.

It localises to the cytoplasm. It is found in the cell membrane. The enzyme catalyses hydrogencarbonate + H(+) = CO2 + H2O. It carries out the reaction urea = cyanamide + H2O. Its activity is regulated as follows. Inhibited by acetazolamide. In terms of biological role, catalyzes the reversible hydration of carbon dioxide. Can also hydrate cyanamide to urea. The chain is Carbonic anhydrase 2 (CA2) from Gallus gallus (Chicken).